Here is a 206-residue protein sequence, read N- to C-terminus: MKKWTNRLMTIAGVVLILVAAYLFAKPHIDNYLHDKDKDEKIEQYDKNVKEQASKDKKQQAKPQIPKDKSKVAGYIEIPDADIKEPVYPGPATPEQLNRGVSFAEENESLDDQNISIAGHTFIDRPNYQFTNLKAAKKGSMVYFKVGNETRKYKMTSIRDVKPTDVGVLDEQKGKDKQLTLITCDDYNEKTGVWEKRKIFVATEVK.

At 1–6 the chain is on the cytoplasmic side; the sequence is MKKWTN. The helical transmembrane segment at 7–24 threads the bilayer; that stretch reads RLMTIAGVVLILVAAYLF. The Extracellular segment spans residues 25–206; that stretch reads AKPHIDNYLH…RKIFVATEVK (182 aa). The disordered stretch occupies residues 49 to 69; that stretch reads VKEQASKDKKQQAKPQIPKDK. Residues Glu105, Glu108, Asp112, and Asn114 each contribute to the Ca(2+) site. The active-site Proton donor/acceptor is the His120. Ca(2+) is bound at residue Glu171. The active-site Acyl-thioester intermediate is Cys184.

It belongs to the bacterial sortase family. Class A subfamily. In terms of assembly, monomer and homodimer; in equilibrium.

It is found in the cell membrane. It carries out the reaction The enzyme catalyzes a cell wall sorting reaction in which a surface protein with a sorting signal containing a LPXTG motif is cleaved between the Thr and Gly residue. The resulting threonine carboxyl end of the protein is covalently attached to a pentaglycine cross-bridge of peptidoglycan.. Sortase activity is regulated by monomer-homodimer equilibrium. Mutant cells with monomeric SrtA display more adhesive proteins on the cell surface and are more invasive than wild-type cells, which have majority of SrtA in dimeric form. Dimerization may suppress the enzymatic activity on cell membranes. Stimulated by calcium ions, which promote substrate binding. Calcium ions bind to SrtA and modulate both the structure and dynamics of a large active site loop. Can also be stimulated, to a lesser extent, by Mg(2+) and Mn(2+). Inhibited by sulfhydryl-modifying reagents. Its function is as follows. Transpeptidase that anchors surface proteins to the cell wall. Recognizes and modifies its substrate by proteolytic cleavage of a C-terminal sorting signal. Following cleavage, a covalent intermediate is formed via a thioester bond between the sortase and its substrate, which is then transferred and covalently attached to the cell wall. This sortase recognizes a Leu-Pro-x-Thr-Gly (LPXTG) motif, which is cleaved by the sortase between the threonine and glycine residues. Utilizes lipid II as the peptidoglycan substrate for the sorting reaction. Responsible for the display of important virulence factors. Important for interactions with the host and host colonization during infection. In Staphylococcus aureus (strain NCTC 8325 / PS 47), this protein is Sortase A.